A 237-amino-acid polypeptide reads, in one-letter code: Chalcone--flavanone isomerase 1 (237 aa).

The substrate site is built by T48, N113, and S190.

It belongs to the chalcone isomerase family.

The catalysed reaction is a chalcone = a flavanone.. Its pathway is secondary metabolite biosynthesis; flavonoid biosynthesis. In terms of biological role, catalyzes the intramolecular cyclization of bicyclic chalcones into tricyclic (S)-flavanones. Responsible for the isomerization of 4,2',4',6'-tetrahydroxychalcone (also termed chalcone) into naringenin. The protein is Chalcone--flavanone isomerase 1 (CHI1) of Fragaria ananassa (Strawberry).